The following is a 320-amino-acid chain: Transaldolase (320 aa).

The active-site Schiff-base intermediate with substrate is lysine 126.

It belongs to the transaldolase family. Type 1 subfamily. In terms of assembly, homodimer.

It is found in the cytoplasm. It catalyses the reaction D-sedoheptulose 7-phosphate + D-glyceraldehyde 3-phosphate = D-erythrose 4-phosphate + beta-D-fructose 6-phosphate. The protein operates within carbohydrate degradation; pentose phosphate pathway; D-glyceraldehyde 3-phosphate and beta-D-fructose 6-phosphate from D-ribose 5-phosphate and D-xylulose 5-phosphate (non-oxidative stage): step 2/3. Its function is as follows. Transaldolase is important for the balance of metabolites in the pentose-phosphate pathway. The chain is Transaldolase from Bordetella pertussis (strain Tohama I / ATCC BAA-589 / NCTC 13251).